Here is a 313-residue protein sequence, read N- to C-terminus: Porphobilinogen deaminase (313 aa).

Cys241 carries the S-(dipyrrolylmethanemethyl)cysteine modification.

The protein belongs to the HMBS family. As to quaternary structure, monomer. The cofactor is dipyrromethane.

The catalysed reaction is 4 porphobilinogen + H2O = hydroxymethylbilane + 4 NH4(+). It participates in porphyrin-containing compound metabolism; protoporphyrin-IX biosynthesis; coproporphyrinogen-III from 5-aminolevulinate: step 2/4. Its pathway is porphyrin-containing compound metabolism; chlorophyll biosynthesis. Its function is as follows. Tetrapolymerization of the monopyrrole PBG into the hydroxymethylbilane pre-uroporphyrinogen in several discrete steps. The protein is Porphobilinogen deaminase of Chlorobium limicola (strain DSM 245 / NBRC 103803 / 6330).